The primary structure comprises 231 residues: MRNAIFIAGTDTDVGKTVASKAILQALATHNIATIGYKPVAAGSDKTEFGYRNSDALHLMKAATVDMPYEDVNPYALVLPTSPHIAAKHENVTIDYALLSNKLSKHKQNAELVVVEGAGGWRVPTSDSDCLSTWVKQERLPVILVVGIKLGCLSHAILTAEAIRADGLELVGWIANRINPGTEHYAEIIEHLEGRLGTPKLGEIPYMPKAKRQELGKFIQLDHLLEPDTVA.

13–18 (DVGKTV) is an ATP binding site. T17 is a Mg(2+) binding site. K38 is a catalytic residue. Residues D55, 116–119 (EGAG), and 176–177 (NR) contribute to the ATP site. Mg(2+)-binding residues include D55 and E116.

The protein belongs to the dethiobiotin synthetase family. Homodimer. It depends on Mg(2+) as a cofactor.

It is found in the cytoplasm. The catalysed reaction is (7R,8S)-7,8-diammoniononanoate + CO2 + ATP = (4R,5S)-dethiobiotin + ADP + phosphate + 3 H(+). It participates in cofactor biosynthesis; biotin biosynthesis; biotin from 7,8-diaminononanoate: step 1/2. Catalyzes a mechanistically unusual reaction, the ATP-dependent insertion of CO2 between the N7 and N8 nitrogen atoms of 7,8-diaminopelargonic acid (DAPA, also called 7,8-diammoniononanoate) to form a ureido ring. The chain is ATP-dependent dethiobiotin synthetase BioD from Vibrio cholerae serotype O1 (strain ATCC 39315 / El Tor Inaba N16961).